The following is a 278-amino-acid chain: Large ribosomal subunit protein uL2 (278 aa).

Composition is skewed to basic residues over residues glycine 210–serine 220 and threonine 257–arginine 278. The interval glycine 210–arginine 278 is disordered.

The protein belongs to the universal ribosomal protein uL2 family. In terms of assembly, part of the 50S ribosomal subunit. Forms a bridge to the 30S subunit in the 70S ribosome.

One of the primary rRNA binding proteins. Required for association of the 30S and 50S subunits to form the 70S ribosome, for tRNA binding and peptide bond formation. It has been suggested to have peptidyltransferase activity; this is somewhat controversial. Makes several contacts with the 16S rRNA in the 70S ribosome. This chain is Large ribosomal subunit protein uL2, found in Acidothermus cellulolyticus (strain ATCC 43068 / DSM 8971 / 11B).